A 316-amino-acid polypeptide reads, in one-letter code: Acetyl-coenzyme A carboxylase carboxyl transferase subunit alpha (316 aa).

One can recognise a CoA carboxyltransferase C-terminal domain in the interval 35 to 292; sequence EIEILSQKLE…KTYVLQELKD (258 aa).

It belongs to the AccA family. Acetyl-CoA carboxylase is a heterohexamer composed of biotin carboxyl carrier protein (AccB), biotin carboxylase (AccC) and two subunits each of ACCase subunit alpha (AccA) and ACCase subunit beta (AccD).

The protein resides in the cytoplasm. The enzyme catalyses N(6)-carboxybiotinyl-L-lysyl-[protein] + acetyl-CoA = N(6)-biotinyl-L-lysyl-[protein] + malonyl-CoA. Its pathway is lipid metabolism; malonyl-CoA biosynthesis; malonyl-CoA from acetyl-CoA: step 1/1. Component of the acetyl coenzyme A carboxylase (ACC) complex. First, biotin carboxylase catalyzes the carboxylation of biotin on its carrier protein (BCCP) and then the CO(2) group is transferred by the carboxyltransferase to acetyl-CoA to form malonyl-CoA. The sequence is that of Acetyl-coenzyme A carboxylase carboxyl transferase subunit alpha from Alkaliphilus oremlandii (strain OhILAs) (Clostridium oremlandii (strain OhILAs)).